The following is a 38-amino-acid chain: Large ribosomal subunit protein bL36 (38 aa).

It belongs to the bacterial ribosomal protein bL36 family.

In Acholeplasma laidlawii (strain PG-8A), this protein is Large ribosomal subunit protein bL36.